The sequence spans 212 residues: Large ribosomal subunit protein uL3 (212 aa).

A compositionally biased stretch (polar residues) spans 139–153 (LSHRVTGSIGQNQTP). A disordered region spans residues 139–161 (LSHRVTGSIGQNQTPGKVFKGKK). N5-methylglutamine is present on Gln151.

Belongs to the universal ribosomal protein uL3 family. In terms of assembly, part of the 50S ribosomal subunit. Forms a cluster with proteins L14 and L19. Methylated by PrmB.

Its function is as follows. One of the primary rRNA binding proteins, it binds directly near the 3'-end of the 23S rRNA, where it nucleates assembly of the 50S subunit. The polypeptide is Large ribosomal subunit protein uL3 (Baumannia cicadellinicola subsp. Homalodisca coagulata).